Reading from the N-terminus, the 545-residue chain is Probable zinc metalloprotease EGY2, chloroplastic (545 aa).

The transit peptide at Met1–Gln63 directs the protein to the chloroplast. Positions Thr66 to Glu142 are disordered. Positions Thr68–Asp85 are enriched in acidic residues. Composition is skewed to polar residues over residues Ser88–Asp109 and Asn117–Asn129. 7 helical membrane-spanning segments follow: residues Ala256–Leu276, Val300–Ala320, Gly325–Ile345, Ala363–Leu383, Pro426–Gly446, Leu473–Phe493, and Tyr513–Phe533.

This sequence belongs to the peptidase M50B family.

The protein localises to the plastid. The protein resides in the chloroplast membrane. In terms of biological role, probable membrane-associated metalloprotease that may be involved in chloroplast development. The sequence is that of Probable zinc metalloprotease EGY2, chloroplastic (EGY2) from Oryza sativa subsp. indica (Rice).